Consider the following 101-residue polypeptide: C-X-C motif chemokine 3 (101 aa).

Positions 1–32 are cleaved as a signal peptide; the sequence is MAPPTRRLLNAALLLLLLLMATSHQPSGTVVA. Intrachain disulfides connect Cys-37–Cys-63 and Cys-39–Cys-79.

The protein belongs to the intercrine alpha (chemokine CxC) family.

Its subcellular location is the secreted. Ligand for CXCR2. Has chemotactic activity for neutrophils. May play a role in inflammation and exert its effects on endothelial cells in an autocrine fashion. The sequence is that of C-X-C motif chemokine 3 (Cxcl3) from Rattus norvegicus (Rat).